A 159-amino-acid chain; its full sequence is Early E3 18.5 kDa glycoprotein (159 aa).

The first 17 residues, 1-17, serve as a signal peptide directing secretion; the sequence is MRYMILGLLALAAVCSA. At 18 to 123 the chain is on the lumenal side; sequence AKKVEFKEPA…PPQKCLENTG (106 aa). 2 disulfide bridges follow: Cys28-Cys45 and Cys39-Cys100. 2 N-linked (GlcNAc...) asparagine; by host glycosylation sites follow: Asn29 and Asn78. A helical membrane pass occupies residues 124–144; the sequence is TFCSTALLITALALVCTLLYL. Over 145–159 the chain is Cytoplasmic; that stretch reads KYKSRRSFIDEKKMP. The short motif at 156–159 is the Di-lysine motif element; it reads KKMP.

This sequence belongs to the adenoviridae E19 family. In terms of processing, both disulfide bonds are absolutely critical for the interaction with MHC antigens. N-glycosylated; high-mannose.

Its subcellular location is the host endoplasmic reticulum membrane. Binds and retains class I heavy chains in the endoplasmic reticulum during the early period of virus infection, thereby impairing their transport to the cell surface. Also delays the expression of class I alleles that it cannot affect by direct retention. Binds transporters associated with antigen processing (TAP) and acts as a tapasin inhibitor, preventing class I/TAP association. In consequence, infected cells are masked for immune recognition by cytotoxic T-lymphocytes. The protein is Early E3 18.5 kDa glycoprotein of Homo sapiens (Human).